We begin with the raw amino-acid sequence, 250 residues long: Thermostable monoacylglycerol lipase (250 aa).

A substrate-binding site is contributed by Phe-29. The active-site Nucleophile is Ser-97. Position 98 (Met-98) interacts with substrate. Active-site charge relay system residues include Asp-196 and His-226.

This sequence belongs to the lipase/esterase LIP3/BchO family. As to quaternary structure, monomer.

It catalyses the reaction Hydrolyzes glycerol monoesters of long-chain fatty acids.. With respect to regulation, not inhibited by cholate, but slightly inhibited by triton X-100 and deoxycholate. Completely inhibited by PMSF (phenylmethylsulfonyl fluoride) at a concentration of 200 uM. Its function is as follows. Hydrolyzes monoacylglycerols, with the highest activity occurring with 1-monolauroylglycerol. The sequence is that of Thermostable monoacylglycerol lipase from Bacillus sp. (strain H-257).